A 279-amino-acid chain; its full sequence is Prepilin leader peptidase/N-methyltransferase (279 aa).

Residues 1–16 (MDDLREFAQLFPAWWF) are Periplasmic-facing. Residues 17–35 (GALGVLGLIVGSFLNVVIY) form a helical membrane-spanning segment. Topologically, residues 36–104 (RLPIMLERRW…RSRCCHQSVS (69 aa)) are cytoplasmic. A helical membrane pass occupies residues 105–123 (VQYPLVEVITMLAFLAAGL). Residues 124-130 (LWLPGMA) are Periplasmic-facing. The helical transmembrane segment at 131–149 (LWGALILLSFLLVLTVIDI) threads the bilayer. Residues 150–163 (KTLLLPDELTLSLL) are Cytoplasmic-facing. Residues 164-182 (WMGLLFNLSGTFVSLNDAV) traverse the membrane as a helical segment. The Periplasmic portion of the chain corresponds to 183-185 (VGA). A helical membrane pass occupies residues 186–204 (MAGYLSLWLLYWAFKYATG). Topologically, residues 205-214 (KEALGYGDFK) are cytoplasmic. A helical membrane pass occupies residues 215-233 (LLAALGAWLGWQALPNLVL). Topologically, residues 234–236 (VAA) are periplasmic. A helical transmembrane segment spans residues 237–254 (LSGLVVTLIWRGLRKEDT). The Cytoplasmic segment spans residues 255–257 (AKP). A helical transmembrane segment spans residues 258 to 276 (LAFGPWLAIGGVFGMIMNG). Topologically, residues 277-279 (FNL) are periplasmic.

Belongs to the peptidase A24 family.

It localises to the cell inner membrane. The catalysed reaction is Typically cleaves a -Gly-|-Phe- bond to release an N-terminal, basic peptide of 5-8 residues from type IV prepilin, and then N-methylates the new N-terminal amino group, the methyl donor being S-adenosyl-L-methionine.. Its function is as follows. Plays a role in type II pseudopili formation by proteolytically removing the leader sequence from substrate proteins and subsequently monomethylating the alpha-amino group of the newly exposed N-terminal phenylalanine. Substrates include proteins required for biogenesis of the type II general secretory apparatus. This chain is Prepilin leader peptidase/N-methyltransferase (outO), found in Pectobacterium carotovorum subsp. carotovorum (Erwinia carotovora subsp. carotovora).